The following is a 100-amino-acid chain: Osteocalcin (100 aa).

A signal peptide spans 1 to 23; it reads MRALTLLALLALATLCITGQAGA. A propeptide spanning residues 24–51 is cleaved from the precursor; that stretch reads KPSGAESSKGAAFVSKQEGSEVVKRPRR. A Gla domain is found at 52–98; that stretch reads YLYQWLGAPAPYPDPLEPKREVCELNPDCDELADHIGFQEAYRRFYG. 4-hydroxyproline is present on proline 60. Ca(2+) contacts are provided by glutamate 68, glutamate 72, glutamate 75, and aspartate 81. Residues glutamate 68, glutamate 72, and glutamate 75 each carry the 4-carboxyglutamate modification. Cysteines 74 and 80 form a disulfide.

The protein belongs to the osteocalcin/matrix Gla protein family. Post-translationally, gamma-carboxyglutamate residues are formed by vitamin K dependent carboxylation by GGCX. These residues are essential for the binding of calcium. Decarboxylation promotes the hormone activity.

Its subcellular location is the secreted. In terms of biological role, the carboxylated form is one of the main organic components of the bone matrix, which constitutes 1-2% of the total bone protein: it acts as a negative regulator of bone formation and is required to limit bone formation without impairing bone resorption or mineralization. The carboxylated form binds strongly to apatite and calcium. Its function is as follows. The uncarboxylated form acts as a hormone secreted by osteoblasts, which regulates different cellular processes, such as energy metabolism, male fertility and brain development. Regulates of energy metabolism by acting as a hormone favoring pancreatic beta-cell proliferation, insulin secretion and sensitivity and energy expenditure. Uncarboxylated osteocalcin hormone also promotes testosterone production in the testes: acts as a ligand for G protein-coupled receptor GPRC6A at the surface of Leydig cells, initiating a signaling response that promotes the expression of enzymes required for testosterone synthesis in a CREB-dependent manner. Also acts as a regulator of brain development: osteocalcin hormone crosses the blood-brain barrier and acts as a ligand for GPR158 on neurons, initiating a signaling response that prevents neuronal apoptosis in the hippocampus, favors the synthesis of all monoamine neurotransmitters and inhibits that of gamma-aminobutyric acid (GABA). Osteocalcin also crosses the placenta during pregnancy and maternal osteocalcin is required for fetal brain development. The protein is Osteocalcin (BGLAP) of Macaca mulatta (Rhesus macaque).